A 756-amino-acid chain; its full sequence is Conserved oligomeric Golgi complex subunit 2 (756 aa).

A coiled-coil region spans residues 62-82 (RSELRSHLASLNRELVDLINR). The interval 173-199 (WQNEDANSMGRSSMNDENSTQQDGTTM) is disordered.

The protein belongs to the COG2 family. In terms of assembly, homodimer. Component of the conserved oligomeric Golgi complex which is composed of eight different subunits and is required for normal Golgi morphology and localization. Binds to COG3 and COG4. Interacts with FPP3/VETH1 and FPP2/VETH2; this interaction promotes the association between cortical microtubules and EXO70A1. Binds to SEC15B, and, possibly, with EXO70A1, SEC3A and SEC10A.

The protein resides in the golgi apparatus membrane. Functionally, required for normal Golgi morphology and function. Ensures, when in complex with FPP3/VETH1 and FPP2/VETH2, the correct secondary cell wall (SCW) deposition pattern by recruiting exocyst components to cortical microtubules in xylem cells during secondary cell wall deposition. This is Conserved oligomeric Golgi complex subunit 2 from Arabidopsis thaliana (Mouse-ear cress).